We begin with the raw amino-acid sequence, 206 residues long: Endoribonuclease YbeY (206 aa).

The tract at residues 1-20 is disordered; that stretch reads MSQANHNDTHNNIDDNINNH. Residues H168, H172, and H178 each contribute to the Zn(2+) site.

Belongs to the endoribonuclease YbeY family. It depends on Zn(2+) as a cofactor.

The protein localises to the cytoplasm. In terms of biological role, single strand-specific metallo-endoribonuclease involved in late-stage 70S ribosome quality control and in maturation of the 3' terminus of the 16S rRNA. This Psychrobacter arcticus (strain DSM 17307 / VKM B-2377 / 273-4) protein is Endoribonuclease YbeY.